A 413-amino-acid chain; its full sequence is 3-hydroxy-3-methylglutaryl-coenzyme A reductase (413 aa).

Residues glutamate 106 and aspartate 312 each act as charge relay system in the active site. Histidine 408 serves as the catalytic Proton donor.

Belongs to the HMG-CoA reductase family.

It carries out the reaction (R)-mevalonate + 2 NADP(+) + CoA = (3S)-3-hydroxy-3-methylglutaryl-CoA + 2 NADPH + 2 H(+). The protein operates within metabolic intermediate biosynthesis; (R)-mevalonate biosynthesis; (R)-mevalonate from acetyl-CoA: step 3/3. Functionally, converts HMG-CoA to mevalonate. This chain is 3-hydroxy-3-methylglutaryl-coenzyme A reductase (hmgA), found in Pyrococcus horikoshii (strain ATCC 700860 / DSM 12428 / JCM 9974 / NBRC 100139 / OT-3).